A 163-amino-acid polypeptide reads, in one-letter code: Protein US34 (163 aa).

An N-terminal signal peptide occupies residues 1–22; sequence MNLEQLINVLGLLVWIAARAVS.

It belongs to the HHV-5 US34 protein family.

The polypeptide is Protein US34 (US34) (Homo sapiens (Human)).